Reading from the N-terminus, the 70-residue chain is Large ribosomal subunit protein bL31 (70 aa).

The Zn(2+) site is built by C16, C18, C37, and C40.

Belongs to the bacterial ribosomal protein bL31 family. Type A subfamily. In terms of assembly, part of the 50S ribosomal subunit. Zn(2+) serves as cofactor.

Functionally, binds the 23S rRNA. This Colwellia psychrerythraea (strain 34H / ATCC BAA-681) (Vibrio psychroerythus) protein is Large ribosomal subunit protein bL31.